The sequence spans 131 residues: Small nuclear ribonucleoprotein SmD3b (131 aa).

The Sm domain occupies 7-79 (IPVKLLHEAS…VRFMVIPDIL (73 aa)). A disordered region spans residues 96-131 (SSSLGVGRGRGAMRGKPAAGPGRGTGGRGAVPPVRR).

This sequence belongs to the snRNP core protein family. In terms of tissue distribution, expressed in young seedlings, roots, leaves, flowers and immature siliques.

The protein localises to the cytoplasm. It localises to the cytosol. It is found in the nucleus. Functionally, core component of the spliceosomal U1, U2, U4 and U5 small nuclear ribonucleoproteins (snRNPs), the building blocks of the spliceosome. May play a major role in the splicing of cellular pre-mRNAs. Required for normal plant development. This is Small nuclear ribonucleoprotein SmD3b from Arabidopsis thaliana (Mouse-ear cress).